Here is a 186-residue protein sequence, read N- to C-terminus: Elongation factor P (186 aa).

This sequence belongs to the elongation factor P family.

Its subcellular location is the cytoplasm. It participates in protein biosynthesis; polypeptide chain elongation. Functionally, involved in peptide bond synthesis. Stimulates efficient translation and peptide-bond synthesis on native or reconstituted 70S ribosomes in vitro. Probably functions indirectly by altering the affinity of the ribosome for aminoacyl-tRNA, thus increasing their reactivity as acceptors for peptidyl transferase. The polypeptide is Elongation factor P (Ruminiclostridium cellulolyticum (strain ATCC 35319 / DSM 5812 / JCM 6584 / H10) (Clostridium cellulolyticum)).